Reading from the N-terminus, the 1220-residue chain is Plasma membrane calcium-transporting ATPase 3 (1220 aa).

The segment covering 1–20 (MGDMANSSIEFHPKPQQQRD) has biased composition (polar residues). The segment at 1 to 23 (MGDMANSSIEFHPKPQQQRDVPQ) is disordered. Over 1-97 (MGDMANSSIE…NFIPPKQPKT (97 aa)) the chain is Cytoplasmic. S8 carries the phosphoserine modification. A helical membrane pass occupies residues 98–118 (FLQLVWEALQDVTLIILEVAA). The Extracellular segment spans residues 119 to 155 (IVSLGLSFYAPPGEESEACGNVSGGAEDEGEAEAGWI). Residues 156–176 (EGAAILLSVICVVLVTAFNDW) form a helical membrane-spanning segment. Over 177–364 (SKEKQFRGLQ…KEKSVLQGKL (188 aa)) the chain is Cytoplasmic. The tract at residues 298–355 (EEEKKDKKGKQQDGAMESSQTKAKKQDGAVAMEMQPLKSAEGGEMEEREKKKANAPKK) is disordered. Basic and acidic residues-rich tracts occupy residues 299-308 (EEKKDKKGKQ) and 342-355 (MEEREKKKANAPKK). The helical transmembrane segment at 365–384 (TKLAVQIGKAGLVMSAITVI) threads the bilayer. At 385-417 (ILVLYFVIETFVVEGRTWLAECTPVYVQYFVKF) the chain is on the extracellular side. A helical transmembrane segment spans residues 418–435 (FIIGVTVLVVAVPEGLPL). The Cytoplasmic segment spans residues 436–849 (AVTISLAYSV…MWGRNVYDSI (414 aa)). Residue D473 is the 4-aspartylphosphate intermediate of the active site. Residues D794 and D798 each coordinate Mg(2+). Residues 850–869 (SKFLQFQLTVNVVAVIVAFT) form a helical membrane-spanning segment. Topologically, residues 870–879 (GACITQDSPL) are extracellular. The chain crosses the membrane as a helical span at residues 880-900 (KAVQMLWVNLIMDTFASLALA). The Cytoplasmic segment spans residues 901–920 (TEPPTESLLLRKPYGRDKPL). A helical transmembrane segment spans residues 921 to 943 (ISRTMMKNILGHAVYQLAIIFTL). Residues 944–961 (LFVGELFFDIDSGRNAPL) are Extracellular-facing. A helical transmembrane segment spans residues 962-983 (HSPPSEHYTIIFNTFVMMQLFN). The Cytoplasmic segment spans residues 984 to 1002 (EINARKIHGERNVFDGIFS). A helical membrane pass occupies residues 1003–1024 (NPIFCTIVLGTFGIQIVIVQFG). Over 1025–1034 (GKPFSCSPLS) the chain is Extracellular. A helical transmembrane segment spans residues 1035-1056 (TEQWLWCLFVGVGELVWGQVIA). At 1057 to 1220 (TIPTSQLKCL…SPLHSVETSL (164 aa)) the chain is on the cytoplasmic side. Position 1079 is a phosphothreonine (T1079). Positions 1097 to 1114 (LRRGQILWFRGLNRIQTQ) are calmodulin-binding subdomain A. A Phosphothreonine; by PKC modification is found at T1113. The calmodulin-binding subdomain B stretch occupies residues 1115-1124 (IRVVKAFRSS). The interval 1166 to 1186 (ENEERLRAPPPPSPNQNNNAI) is disordered.

It belongs to the cation transport ATPase (P-type) (TC 3.A.3) family. Type IIB subfamily. As to quaternary structure, interacts with PDZD11. Interacts (via N-terminus) with YWHAE. In terms of tissue distribution, highly expressed in the cerebellum. Expressed in adrenal glands.

The protein resides in the cell membrane. It is found in the presynaptic cell membrane. It catalyses the reaction Ca(2+)(in) + ATP + H2O = Ca(2+)(out) + ADP + phosphate + H(+). With respect to regulation, down-regulated by YWHAE. ATP-driven Ca(2+) ion pump involved in the maintenance of basal intracellular Ca(2+) levels at the presynaptic terminals. Uses ATP as an energy source to transport cytosolic Ca(2+) ions across the plasma membrane to the extracellular compartment. May counter-transport protons, but the mechanism and the stoichiometry of this Ca(2+)/H(+) exchange remains to be established. The polypeptide is Plasma membrane calcium-transporting ATPase 3 (Homo sapiens (Human)).